The primary structure comprises 859 residues: Envelope glycoprotein (859 aa).

Residues 1–6 constitute a propeptide that is removed on maturation; sequence MVSIAF. Over 7–614 the chain is Extracellular; sequence YGGIPGGIST…KDLWSHIGNW (608 aa). N-linked (GlcNAc...) asparagine; by host glycosylation is found at asparagine 40, asparagine 112, asparagine 141, asparagine 148, asparagine 186, asparagine 214, asparagine 233, asparagine 244, asparagine 313, asparagine 340, asparagine 368, asparagine 399, asparagine 406, and asparagine 411. The interval 446–466 is fusion peptide; the sequence is FGISAIVAAIVAATAIAASAT. N-linked (GlcNAc...) asparagine; by host glycosylation is found at asparagine 483 and asparagine 490. The segment at 498-513 is immunosuppression; the sequence is LIERQIKILYAMILQT. 2 N-linked (GlcNAc...) asparagine; by host glycosylation sites follow: asparagine 550 and asparagine 557. Coiled coils occupy residues 576-624 and 663-699; these read ILTT…SIIK and KKFH…YYKQ. Residues 615–635 form a helical membrane-spanning segment; it reads IPGLGASIIKYIVMFLLIYLL. Residues 636 to 859 lie on the Cytoplasmic side of the membrane; the sequence is LTSSPKILRA…TSHVSMPQYV (224 aa).

The mature envelope protein (Env) consists of a trimer of SU-TM heterodimers attached by noncovalent interactions or by a labile interchain disulfide bond. Specific enzymatic cleavages in vivo yield mature proteins. Envelope glycoproteins are synthesized as an inactive precursor that is N-glycosylated and processed likely by host cell furin or by a furin-like protease in the Golgi to yield the mature SU and TM proteins. The cleavage site between SU and TM requires the minimal sequence [KR]-X-[KR]-R.

The protein resides in the virion membrane. The protein localises to the host cell membrane. Its function is as follows. The surface protein (SU) attaches the virus to the host cell by binding to its receptor. This interaction triggers the refolding of the transmembrane protein (TM) and is thought to activate its fusogenic potential by unmasking its fusion peptide. Fusion occurs at the host cell plasma membrane. The transmembrane protein (TM) acts as a class I viral fusion protein. Under the current model, the protein has at least 3 conformational states: pre-fusion native state, pre-hairpin intermediate state, and post-fusion hairpin state. During viral and target cell membrane fusion, the coiled coil regions (heptad repeats) assume a trimer-of-hairpins structure, positioning the fusion peptide in close proximity to the C-terminal region of the ectodomain. The formation of this structure appears to drive apposition and subsequent fusion of viral and target cell membranes. Membranes fusion leads to delivery of the nucleocapsid into the cytoplasm. This is Envelope glycoprotein (env) from Equus asinus (Donkey).